The sequence spans 152 residues: Urease accessory protein UreE (152 aa).

This sequence belongs to the UreE family.

It is found in the cytoplasm. In terms of biological role, involved in urease metallocenter assembly. Binds nickel. Probably functions as a nickel donor during metallocenter assembly. The chain is Urease accessory protein UreE from Enterobacter sp. (strain 638).